The following is a 95-amino-acid chain: Aspartyl/glutamyl-tRNA(Asn/Gln) amidotransferase subunit C (95 aa).

It belongs to the GatC family. Heterotrimer of A, B and C subunits.

It carries out the reaction L-glutamyl-tRNA(Gln) + L-glutamine + ATP + H2O = L-glutaminyl-tRNA(Gln) + L-glutamate + ADP + phosphate + H(+). It catalyses the reaction L-aspartyl-tRNA(Asn) + L-glutamine + ATP + H2O = L-asparaginyl-tRNA(Asn) + L-glutamate + ADP + phosphate + 2 H(+). Functionally, allows the formation of correctly charged Asn-tRNA(Asn) or Gln-tRNA(Gln) through the transamidation of misacylated Asp-tRNA(Asn) or Glu-tRNA(Gln) in organisms which lack either or both of asparaginyl-tRNA or glutaminyl-tRNA synthetases. The reaction takes place in the presence of glutamine and ATP through an activated phospho-Asp-tRNA(Asn) or phospho-Glu-tRNA(Gln). The chain is Aspartyl/glutamyl-tRNA(Asn/Gln) amidotransferase subunit C from Pelagibacter ubique (strain HTCC1062).